A 167-amino-acid polypeptide reads, in one-letter code: NADH-quinone oxidoreductase subunit B (167 aa).

4 residues coordinate [4Fe-4S] cluster: cysteine 40, cysteine 41, cysteine 105, and cysteine 135.

Belongs to the complex I 20 kDa subunit family. NDH-1 is composed of 14 different subunits. Subunits NuoB, C, D, E, F, and G constitute the peripheral sector of the complex. Requires [4Fe-4S] cluster as cofactor.

The protein localises to the cell inner membrane. It catalyses the reaction a quinone + NADH + 5 H(+)(in) = a quinol + NAD(+) + 4 H(+)(out). Functionally, NDH-1 shuttles electrons from NADH, via FMN and iron-sulfur (Fe-S) centers, to quinones in the respiratory chain. The immediate electron acceptor for the enzyme in this species is believed to be ubiquinone. Couples the redox reaction to proton translocation (for every two electrons transferred, four hydrogen ions are translocated across the cytoplasmic membrane), and thus conserves the redox energy in a proton gradient. The chain is NADH-quinone oxidoreductase subunit B from Magnetococcus marinus (strain ATCC BAA-1437 / JCM 17883 / MC-1).